The primary structure comprises 262 residues: Flap endonuclease Xni (262 aa).

Asp-105 lines the Mg(2+) pocket. The 93-residue stretch at 162–254 (ERSQFLDLMA…LKDFRVIDSL (93 aa)) folds into the 5'-3' exonuclease domain. K(+)-binding residues include Leu-172, Ala-173, Pro-181, Ile-183, and Ile-186. Residues 185-190 (GIGPKS) form an interaction with DNA region.

This sequence belongs to the Xni family. Mg(2+) is required as a cofactor. K(+) serves as cofactor.

Its function is as follows. Has flap endonuclease activity. During DNA replication, flap endonucleases cleave the 5'-overhanging flap structure that is generated by displacement synthesis when DNA polymerase encounters the 5'-end of a downstream Okazaki fragment. The protein is Flap endonuclease Xni of Shewanella baltica (strain OS195).